The sequence spans 115 residues: MCSPTQPTLAAGNVVDQLKRAGSAEEFFTLLGVCFDPKVLDVARLHILKRMGQYLASEDLEAMPNSVAAARCKAVLERAYEDFLTSTPLDQRVFKVLKDAVAPKKTHFVPLETLK.

Belongs to the NifW family. In terms of assembly, homotrimer; associates with NifD.

Its function is as follows. May protect the nitrogenase Fe-Mo protein from oxidative damage. This Rhodopseudomonas palustris (strain BisB18) protein is Nitrogenase-stabilizing/protective protein NifW.